We begin with the raw amino-acid sequence, 66 residues long: Large ribosomal subunit protein bL33c (66 aa).

The protein belongs to the bacterial ribosomal protein bL33 family.

The protein localises to the plastid. Its subcellular location is the chloroplast. This is Large ribosomal subunit protein bL33c from Morus indica (Mulberry).